Consider the following 142-residue polypeptide: Small ribosomal subunit protein uS12 (142 aa).

Residues 1 to 44 (MANGKYAARKLKQDRQKHRWSDSDYARRARGLGKKSDPLEGAPQ) are disordered. A compositionally biased stretch (basic and acidic residues) spans 11 to 27 (LKQDRQKHRWSDSDYAR).

It belongs to the universal ribosomal protein uS12 family. As to quaternary structure, part of the 30S ribosomal subunit.

In terms of biological role, with S4 and S5 plays an important role in translational accuracy. Located at the interface of the 30S and 50S subunits. This is Small ribosomal subunit protein uS12 from Natronomonas pharaonis (strain ATCC 35678 / DSM 2160 / CIP 103997 / JCM 8858 / NBRC 14720 / NCIMB 2260 / Gabara) (Halobacterium pharaonis).